The primary structure comprises 226 residues: Beta-phosphoglucomutase (226 aa).

The Nucleophile role is filled by D7. The Mg(2+) site is built by D7 and D9. Residue D7 is modified to 4-aspartylphosphate. D9 serves as the catalytic Proton donor/acceptor. Beta-D-glucose 6-phosphate contacts are provided by D9, G44, I45, R47, S116, R117, and N118. D170 is a Mg(2+) binding site.

Belongs to the HAD-like hydrolase superfamily. CbbY/CbbZ/Gph/YieH family. In terms of assembly, homodimer. Mg(2+) serves as cofactor. Autophosphorylated.

The protein localises to the cytoplasm. The enzyme catalyses beta-D-glucose 1-phosphate = beta-D-glucose 6-phosphate. Functionally, catalyzes the interconversion of D-glucose 1-phosphate (G1P) and D-glucose 6-phosphate (G6P), forming beta-D-glucose 1,6-(bis)phosphate (beta-G16P) as an intermediate. The protein is Beta-phosphoglucomutase (yvdM) of Bacillus subtilis (strain 168).